The primary structure comprises 506 residues: Steroid (22S)-hydroxylase (506 aa).

A helical membrane pass occupies residues 12 to 32 (LLFFLPFILLALLTFYTTTVA). Cys-449 serves as a coordination point for heme.

This sequence belongs to the cytochrome P450 family. The cofactor is heme.

It is found in the membrane. The catalysed reaction is a C28-steroid + reduced [NADPH--hemoprotein reductase] + O2 = a (22S)-22-hydroxy C28-steroid + oxidized [NADPH--hemoprotein reductase] + H2O + H(+). It catalyses the reaction campesterol + reduced [NADPH--hemoprotein reductase] + O2 = (22S)-22-hydroxycampesterol + oxidized [NADPH--hemoprotein reductase] + H2O + H(+). It carries out the reaction campestanol + reduced [NADPH--hemoprotein reductase] + O2 = 6-deoxycathasterone + oxidized [NADPH--hemoprotein reductase] + H2O + H(+). It participates in plant hormone biosynthesis; brassinosteroid biosynthesis. In terms of biological role, catalyzes the C22-alpha-hydroxylation step in brassinosteroid biosynthesis, which is the rate-limiting step in this biosynthetic pathway. Catalyzes the conversion of campesterol (CR) to (22S)-22-hydroxycampesterol (22-OHCR, 22-hydroxyCR) and of campestanol (CN) to 6-deoxocathasterone (6-deoxoCT). This is Steroid (22S)-hydroxylase from Oryza sativa subsp. indica (Rice).